A 567-amino-acid polypeptide reads, in one-letter code: Diphtheria toxin (567 aa).

The first 32 residues, 1–32 (MLVRGYVVSRKLFASILIGALLGIGAPPSAHA), serve as a signal peptide directing secretion. Residues His-53 and Tyr-97 each coordinate NAD(+). Glu-180 is a catalytic residue. Disulfide bonds link Cys-218-Cys-233 and Cys-493-Cys-503.

As to quaternary structure, homodimer. Post-translationally, proteolytic activation by host furin cleaves the protein in two parts, Diphtheria toxin fragment A and Diphtheria toxin fragment B; which remain associated via a disulfide bond.

It catalyses the reaction diphthamide-[translation elongation factor 2] + NAD(+) = N-(ADP-D-ribosyl)diphthamide-[translation elongation factor 2] + nicotinamide + H(+). With respect to regulation, partially inhibited by 1,8-naphthalimide (NAP). In terms of biological role, diphtheria toxin, produced by a phage infecting Corynebacterium diphtheriae, is a proenzyme that, after activation, catalyzes the covalent attachment of the ADP ribose moiety of NAD to eukaryotic elongation factor 2 (eEF-2). Fragment A is the catalytic portion responsible for enzymatic ADP-ribosylation of elongation factor 2, while fragment B is responsible for binding of toxin to cell receptors and entry of fragment A. This chain is Diphtheria toxin, found in Corynebacterium diphtheriae.